The primary structure comprises 330 residues: MITMDLMSGYGRVDEQVAIQEAAAAGLRGMEHLILQLSQTGTSERSPAPAPAQEQQQQQQVDCREITDMTVSKFKKVISMLNRTGHARFRRGPVVAQSSGPAASEPAPVRSSPSAVSRPMTLDFTKAASGYGKDAGFSVSGISAASSSFLSSVTGDGSVSNGRGGGSSSLMLPPPPATSCGKPPLSSAAAAMSAGVGHKRKCHDHAHSENIAGGKYGSTGGRCHCSKRRKHRVKRTIRVPAISSKVADIPADDFSWRKYGQKPIKGSPFPRGYYKCSTLRGCPARKHVERDPADPSMLIVTYEGEHRHTPSAAGQDHPPAPPPPLALPLA.

The tract at residues 39–61 is disordered; it reads QTGTSERSPAPAPAQEQQQQQQV. A compositionally biased stretch (low complexity) spans 51 to 60; that stretch reads PAQEQQQQQQ. Positions 74–81 match the Nuclear localization signal motif; the sequence is FKKVISML. 2 disordered regions span residues 91–117 and 302–330; these read RGPV…SAVS and YEGE…LPLA. Residues 101–117 show a composition bias toward low complexity; it reads PAASEPAPVRSSPSAVS. A DNA-binding region (WRKY) is located at residues 245 to 311; that stretch reads KVADIPADDF…YEGEHRHTPS (67 aa). Residues 318–330 show a composition bias toward pro residues; it reads PPAPPPPLALPLA.

Belongs to the WRKY group II-a family. As to expression, highly expressed in aleurone cells. In seeds, predominantly present in the plumule, radicle and scutellum of the embryo.

The protein resides in the nucleus. Functionally, transcription factor. Interacts, when in complex with WRKY71, specifically with the W box (5'-(T)TGAC[CT]-3'), a frequently occurring elicitor-responsive cis-acting element. Represses specifically gibberellic acid (GA)-induced promoters in aleurone cells, probably by interfering with GAM1. This Oryza sativa subsp. indica (Rice) protein is WRKY transcription factor WRKY51.